Reading from the N-terminus, the 122-residue chain is Large ribosomal subunit protein uL14 (122 aa).

The protein belongs to the universal ribosomal protein uL14 family. In terms of assembly, part of the 50S ribosomal subunit. Forms a cluster with proteins L3 and L19. In the 70S ribosome, L14 and L19 interact and together make contacts with the 16S rRNA in bridges B5 and B8.

Binds to 23S rRNA. Forms part of two intersubunit bridges in the 70S ribosome. The chain is Large ribosomal subunit protein uL14 from Micrococcus luteus (strain ATCC 4698 / DSM 20030 / JCM 1464 / CCM 169 / CCUG 5858 / IAM 1056 / NBRC 3333 / NCIMB 9278 / NCTC 2665 / VKM Ac-2230) (Micrococcus lysodeikticus).